The sequence spans 207 residues: uncharacterized protein (207 aa).

Active-site charge relay system residues include serine 119 and histidine 160.

The protein belongs to the peptidase S51 family.

This is an uncharacterized protein from Pasteurella multocida (strain Pm70).